Reading from the N-terminus, the 576-residue chain is MEGSKLLPCVHKSPVPTSHQLYINYEILGLTKLKKHKYTQNKMSSSDSSSAESRLATAKTVLTTAASVAATAMLARSLVQDYLPDEVHHYISYGFRSIFGYFSSQMTIIIEEFEGFAHNEVFEAAEAYLATKISPSNKRIKVSKHEKENNYNVTVERDEEVVDTYNGVKFQWILHCRHVESKHFHNPRDLNSTLRSEVRSFELNFHKKFKDVALESYLPFMVKRATLMKQEKKTLKIFTLSPENMYGNYSDAWTSVTLDHPSTFKTLAMDSDVKTSVMEDLDKFVKRRDFYKRVGKAWKRGYLLYGPPGTGKSSLIAAMANHLNFDIYDLELTAVNNNSELRRLLIATANRSILIVEDIDCSLELKDRTSDEPPRESDDIEDPRYKKVTLSGLLNFIDGLWSSCGDERIIIFTTNYKEKLDAALLRPGRMDMHIHMSYCTPSTFKALALNYLEIKEHRLFSKIEEGIEATEVTPAEVAEQLMRNDSVDKVLEGLIEFLKVKKIENEQDKAKTEKQELENKKKTKEGTDSVVKKEVDEQLVRNDRVDKVLEGLVELLKAKKIEDDQDKAKHEEVEQH.

The chain crosses the membrane as a helical span at residues 55–75 (LATAKTVLTTAASVAATAMLA). 306-313 (GPPGTGKS) provides a ligand contact to ATP. Positions 508–532 (DKAKTEKQELENKKKTKEGTDSVVK) are disordered.

This sequence belongs to the AAA ATPase family. BCS1 subfamily. Binds to the Yariv phenylglycoside (beta-D-Glc)(3). Mg(2+) is required as a cofactor.

The protein localises to the membrane. The catalysed reaction is ATP + H2O = ADP + phosphate + H(+). The polypeptide is Protein HYPER-SENSITIVITY-RELATED 4 (Arabidopsis thaliana (Mouse-ear cress)).